Here is a 2752-residue protein sequence, read N- to C-terminus: Piezo-type mechanosensitive ion channel component 2 (2752 aa).

At 1–12 (MASEVVCGLIFR) the chain is on the cytoplasmic side. A helical transmembrane segment spans residues 13–24 (LLLPICLAVACA). The Extracellular portion of the chain corresponds to 25–30 (FRYNGL). The helical transmembrane segment at 31–43 (SFVYLIYLLLIPL) threads the bilayer. The Cytoplasmic segment spans residues 44 to 50 (FSEPTKT). Residues 51–76 (TMQGHTGRLLKSLCFISLSFLLLHII) form a helical membrane-spanning segment. Over 77-122 (FHITLVSLEAQHRIAPGYNCSTWEKTFRQIGFESLKGADAGNGIRV) the chain is Extracellular. A glycan (N-linked (GlcNAc...) asparagine) is linked at Asn95. A helical membrane pass occupies residues 123 to 141 (FVPDIGMFIASLTIWLLCR). At 142–221 (NIVQKPVTDE…KEFIGNMITT (80 aa)) the chain is on the cytoplasmic side. Residues 222–237 (AGKVVVTILLGSSGMM) form a helical membrane-spanning segment. Topologically, residues 238–240 (LPS) are extracellular. Residues 241-258 (LTSSVYFFVFLGLCTWWS) form a helical membrane-spanning segment. The Cytoplasmic portion of the chain corresponds to 259 to 264 (WCRTFD). The chain crosses the membrane as a helical span at residues 265–287 (PLLFSCLCVLLAIFTAGHLIGLY). Topologically, residues 288-335 (LYQFQFFQEAVPPNDYYARLFGIKSVIQTDCSSTWKIIVNPDLSWYHH) are extracellular. Residues 336–355 (ANPILLLVMYYTLATLIRIW) form a helical membrane-spanning segment. At 356 to 492 (LQEPLVQDEG…SIKVHAMVSV (137 aa)) the chain is on the cytoplasmic side. The interval 446–478 (STPQYRWEPSDESSEKREEEEEEKEEFEEERSR) is disordered. Residues 463-474 (EEEEEEKEEFEE) are compositionally biased toward acidic residues. Residues 493 to 514 (FQFIMKQSYICALIAMMAWSIT) traverse the membrane as a helical segment. Residues 515–519 (YHSWL) are Extracellular-facing. Residues 520–531 (TFVLLIWSCTLW) traverse the membrane as a helical segment. Residues 532 to 535 (MIRN) are Cytoplasmic-facing. A helical membrane pass occupies residues 536–562 (RRKYAMISSPFMVVYGNLLLILQYIWS). Topologically, residues 563–583 (FELPEIKKVPGFLEKKEPGEL) are extracellular. A helical transmembrane segment spans residues 584–614 (ASKILFTITFWLLLRQHLTEQKALQEKEALL). Residues 615 to 685 (SEVKIGSQEN…GNLVVAMFIK (71 aa)) are Cytoplasmic-facing. Residues 623 to 632 (ENEEKDEELQ) are compositionally biased toward acidic residues. The tract at residues 623–664 (ENEEKDEELQDIQVEGEPKEEEEEEAKEEKQERKKVEQEEAE) is disordered. Residues 649-660 (KEEKQERKKVEQ) show a composition bias toward basic and acidic residues. Residues 686–699 (YWIYVCGGMFFFVS) traverse the membrane as a helical segment. Over 700–705 (FEGKIV) the chain is Extracellular. The chain crosses the membrane as a helical span at residues 706–724 (MYKIIYMVLFLFCVALYQV). The Cytoplasmic segment spans residues 725–733 (HYEWWRKIL). A helical membrane pass occupies residues 734–753 (KYFWMSVVIYTMLVLIFIYT). The Extracellular portion of the chain corresponds to 754–785 (YQFENFPGLWQNMTGLKKEKLEDLGLKQFTVA). A helical transmembrane segment spans residues 786 to 807 (ELFTRIFIPTSFLLVCILHLHY). The Cytoplasmic segment spans residues 808–940 (FHDRFLELTD…QVFMWWILEL (133 aa)). A Phosphoserine modification is found at Ser838. Basic and acidic residues predominate over residues 862–883 (PGEEKLEGYSEKAQKGDLGKDS). The segment at 862 to 902 (PGEEKLEGYSEKAQKGDLGKDSEESEEDGEEEEESEEEEET) is disordered. Acidic residues predominate over residues 884-902 (EESEEDGEEEEESEEEEET). Residues 941-956 (HIIKIVSSYIIWVSVK) traverse the membrane as a helical segment. The Extracellular segment spans residues 957 to 962 (EVSLFN). A helical membrane pass occupies residues 963 to 972 (YVFLISWAFA). The Cytoplasmic segment spans residues 973–980 (LPYAKLRR). Residues 981-1001 (LASSVCTVWTCVIIVCKMLYQ) traverse the membrane as a helical segment. Over 1002–1057 (LQTIKPENFSVNCSLPNENQTNIPFNELNKSLLYSAPIDPTEWVGLRKSSPLLVYL) the chain is Extracellular. N-linked (GlcNAc...) asparagine glycosylation occurs at Asn1013. A disulfide bond links Cys1014 and Cys1192. A helical transmembrane segment spans residues 1058–1082 (RNNLLMLAILAFEVTIYRHQEYYRG). Topologically, residues 1083 to 1123 (RNNLTAPVSRTIFHDITRLHLDDGLINCAKYFINYFFYKFG) are cytoplasmic. The chain crosses the membrane as a helical span at residues 1124–1138 (LETCFLMSVNVIGQR). The Extracellular segment spans residues 1139–1140 (MD). Residues 1141–1154 (FYAMIHACWLIAVL) form a helical membrane-spanning segment. Residues 1155–1165 (YRRRRKAIAEI) lie on the Cytoplasmic side of the membrane. Residues 1166–1185 (WPKYCCFLACIITFQYFICI) form a helical membrane-spanning segment. Topologically, residues 1186–1222 (GIPPAPCRDYPWRFKGASFNDNIIKWLYFPDFIVRPN) are extracellular. Residues 1223-1243 (PVFLVYDFMLLLCASLQRQIF) form a helical membrane-spanning segment. The Cytoplasmic segment spans residues 1244 to 1297 (EDENKAAVRIMAGDNVEICMNLDAASFSQHNPVPDFIHCRSYLDMSKVIIFSYL). A helical transmembrane segment spans residues 1298–1310 (FWFVLTIIFITGT). The Extracellular segment spans residues 1311 to 1316 (TRISIF). The helical transmembrane segment at 1317–1329 (CMGYLVACFYFLL) threads the bilayer. At 1330-1338 (FGGDLLLKP) the chain is on the cytoplasmic side. A helical membrane pass occupies residues 1339–1364 (IKSILRYWDWLIAYNVFVITMKNILS). Over 1365–1413 (IGACGYIGTLVHNSCWLIQAFSLACTVKGYQMPAANSPCTLPSGEAGII) the chain is Extracellular. A helical transmembrane segment spans residues 1414-1430 (WDSICFAFLLLQRRVFM). Residues 1431-1921 (SYYFLHVVAD…YAMYNTLVAR (491 aa)) lie on the Cytoplasmic side of the membrane. Residues 1458–1529 (TIVKAVKARI…EREADKQKAK (72 aa)) are a coiled coil. 3 disordered regions span residues 1488–1534 (QQKY…KKKQ), 1593–1636 (ALRQ…KKSD), and 1844–1868 (SQDDSAGKNRMAVSPDDSRTDKLGS). The segment covering 1594-1615 (LRQRHKEKKRSAREERKRRRKG) has biased composition (basic residues). The helical transmembrane segment at 1922–1936 (SEMVCYFVIILNHMV) threads the bilayer. Residues 1937 to 1943 (SASMITL) are Extracellular-facing. The helical transmembrane segment at 1944–1955 (LLPILIFLWAML) threads the bilayer. Residues 1956–1961 (SVPRPS) lie on the Cytoplasmic side of the membrane. A helical membrane pass occupies residues 1962-1983 (RRFWMMAIVYTEVAIVVKYFFQ). Topologically, residues 1984-2016 (FGFFPWNKNVEVNKDKPYHPPNIIGVEKKEGYV) are extracellular. A helical transmembrane segment spans residues 2017-2035 (LYDLIQLLALFFHRSILKC). At 2036 to 2189 (HGLWDEDDMT…HPEYSAVTDV (154 aa)) the chain is on the cytoplasmic side. Disordered regions lie at residues 2047–2069 (SGMAREESDDELSLGHGRRDSSD) and 2090–2135 (QQTA…SVLS). Low complexity predominate over residues 2100-2127 (GSSSEPSQRSSFSSNRSQRGSTSTRNSS). Residues 2190 to 2209 (YVLMFLADTVDFIIIVFGFW) traverse the membrane as a helical segment. Residues 2210 to 2231 (AFGKHSAAADITSSLSEDQVPG) lie on the Extracellular side of the membrane. The chain crosses the membrane as a helical span at residues 2232–2252 (PFLVMVLIQFGTMVVDRALYL). Over 2253 to 2256 (RKTV) the chain is Cytoplasmic. Residues 2257-2280 (LGKVIFQVILVFGIHFWMFFILPG) traverse the membrane as a helical segment. The Extracellular portion of the chain corresponds to 2281-2289 (VTERKFSQN). The helical transmembrane segment at 2290–2312 (LVAQLWYFVKCVYFGLSAYQIRC) threads the bilayer. At 2313-2397 (GYPTRVLGNF…YPQPRGQKKK (85 aa)) the chain is on the cytoplasmic side. Residues 2398–2421 (KVVKYGMGGMIIVLLICIVWFPLL) form a helical membrane-spanning segment. Over 2422–2669 (FMSLIKSVAG…PSLGFLAGYG (248 aa)) the chain is Extracellular. Residues 2670–2690 (IMGLYASVVLVIGKFVREFFS) traverse the membrane as a helical segment. The Cytoplasmic segment spans residues 2691–2752 (GISHSIMFEE…MIKWTREKTN (62 aa)).

This sequence belongs to the PIEZO (TC 1.A.75) family. In terms of assembly, homotrimer; the homotrimer forms a propeller-shaped Piezo channel with a cation-ion conducting pore. Heterotrimeric interaction may occur between PIEZO1 and PIEZO2. Interacts with STOML3. Interacts with TMC7; the interaction inhibits PIEZO2-conducted mechanically activated currents. Interacts with TMC1; the interaction may be part of the MET complex. Interacts with MDFIC (via C-terminus); the interaction prolongs Piezo channel inactivation. Interacts with MDFI (via C-terminus); the interaction prolongs Piezo channel inactivation.

It is found in the cell membrane. The catalysed reaction is Ca(2+)(in) = Ca(2+)(out). Regulated by auxillary subunits MDFIC and MDFI. Channel activity is inhibited by TMEM120A. Phosphatidic acid and lysophosphatidic acid inhibit PIEZO2 channel activity. Functionally, pore-forming subunit of the mechanosensitive non-specific cation Piezo channel required for rapidly adapting mechanically activated (MA) currents and has a key role in sensing touch and tactile pain. Piezo channels are homotrimeric three-blade propeller-shaped structures that utilize a cap-motion and plug-and-latch mechanism to gate their ion-conducting pathways. Expressed in sensory neurons, is essential for diverse physiological processes, including respiratory control, systemic metabolism, urinary function, and proprioception. Mediates airway stretch sensing, enabling efficient respiration at birth and maintaining normal breathing in adults. It regulates brown and beige adipose tissue morphology and function, preventing systemic hypermetabolism. In the lower urinary tract, acts as a sensor in both the bladder urothelium and innervating sensory neurons being required for bladder-stretch sensing and urethral micturition reflexes, ensuring proper urinary function. Additionally, PIEZO2 serves as the principal mechanotransducer in proprioceptors, facilitating proprioception and coordinated body movements. In inner ear hair cells, PIEZO1/2 subunits may constitute part of the mechanotransducer (MET) non-selective cation channel complex where they may act as pore-forming ion-conducting component in the complex. Required for Merkel-cell mechanotransduction. Plays a major role in light-touch mechanosensation. The protein is Piezo-type mechanosensitive ion channel component 2 of Homo sapiens (Human).